Consider the following 550-residue polypeptide: Invertase (550 aa).

Residues 1-22 (MIQLSPLLLLPLFSVFNSIADA) form the signal peptide. Residues 39 to 42 (WMND), Gln60, and 103 to 104 (FS) each bind substrate. Residue Asp42 is part of the active site. Residues Asn112, Asn113, Asn119, and Asn165 are each glycosylated (N-linked (GlcNAc...) asparagine). 170–171 (RD) contacts substrate. An N-linked (GlcNAc...) asparagine glycan is attached at Asn211. Glu223 serves as a coordination point for substrate. Residue Asn237 is glycosylated (N-linked (GlcNAc...) asparagine). Trp313 contacts substrate. Residues Asn333, Asn364, Asn398, and Asn420 are each glycosylated (N-linked (GlcNAc...) asparagine).

It belongs to the glycosyl hydrolase 32 family.

The enzyme catalyses Hydrolysis of terminal non-reducing beta-D-fructofuranoside residues in beta-D-fructofuranosides.. This chain is Invertase (INV1), found in Wickerhamomyces anomalus (Yeast).